Reading from the N-terminus, the 455-residue chain is MDLPSHHSRLLRQLDEQRRRNLFCDCHIMIDGHTFRAHRNVLYASSGYFKMLLSQSSGNVGQPTTATFDVFSADTFTAILDFMYSGKLNLSGQNVIEIMSAASYLQMTEVIGVCKMFIKSSLDINEKDRDGFLDISDKETGQQTGQCGLYSTGWGMGRYHCNQPEGDIAAYLETSSCTPYGFCSRTDEHPSSQNSISTATMKMLDRHNRIPQIPSSTCSPEEHLRECRILESDDTGCHIEVELPQGEETEAFLNCQTVVQPRSRRRHSLNRATKADEVYAKIMGIKGCLGEDNLPSLHFKCPFCTHTVKRKADLKRHLLCHTGERPYPCQACGKRFTRLEHVRSHYRTIHEAGKPICRWCKRHVTEDSGQVVQEGTRRFRLCNKCVAEVGVGSFPNEVDDDEPTIILSGDEDKEPTWNFHDGIQTSDPEIIEDVSSDVVIHKVDDSDDEIKPIIC.

The BTB domain maps to 24–92 (CDCHIMIDGH…MYSGKLNLSG (69 aa)). 2 consecutive C2H2-type zinc fingers follow at residues 299–321 (FKCP…LLCH) and 327–350 (YPCQ…RTIH).

The protein localises to the nucleus. In terms of biological role, may be involved in transcriptional regulation. This is Zinc finger and BTB domain-containing protein 8A.2 (zbtb8a.2) from Xenopus tropicalis (Western clawed frog).